Reading from the N-terminus, the 255-residue chain is Pro-thyrotropin-releasing hormone (255 aa).

The N-terminal stretch at 1–24 is a signal peptide; that stretch reads MPGPWLLLALALIFTLTGIPESCA. Residues 76 to 102 form a disordered region; sequence RQHPGKREEEEKDIEAEERGDLGEGGA. Proline amide occurs at positions 79 and 111. Gln154 carries the pyrrolidone carboxylic acid modification. Proline amide is present on Pro156. Gln172 bears the Pyrrolidone carboxylic acid mark. Pro174 carries the proline amide modification. The span at 184 to 202 shows a compositional bias: basic and acidic residues; the sequence is QRSWEEKEGEGVLMPEKRQ. Disordered regions lie at residues 184-214 and 235-255; these read QRSW…HPCG and QETL…PLEE. The residue at position 204 (Pro204) is a Proline amide. Polar residues predominate over residues 235–244; it reads QETLVKQSPQ.

This sequence belongs to the TRH family.

The protein localises to the secreted. Functions as a regulator of the biosynthesis of TSH in the anterior pituitary gland and as a neurotransmitter/ neuromodulator in the central and peripheral nervous systems. The protein is Pro-thyrotropin-releasing hormone (Trh) of Rattus norvegicus (Rat).